A 184-amino-acid polypeptide reads, in one-letter code: ATP synthase subunit b, chloroplastic (184 aa).

Residues 27–49 traverse the membrane as a helical segment; that stretch reads LATNLINLSVVLGVLIFFGKGVL.

The protein belongs to the ATPase B chain family. F-type ATPases have 2 components, F(1) - the catalytic core - and F(0) - the membrane proton channel. F(1) has five subunits: alpha(3), beta(3), gamma(1), delta(1), epsilon(1). F(0) has four main subunits: a(1), b(1), b'(1) and c(10-14). The alpha and beta chains form an alternating ring which encloses part of the gamma chain. F(1) is attached to F(0) by a central stalk formed by the gamma and epsilon chains, while a peripheral stalk is formed by the delta, b and b' chains.

It localises to the plastid. The protein localises to the chloroplast thylakoid membrane. F(1)F(0) ATP synthase produces ATP from ADP in the presence of a proton or sodium gradient. F-type ATPases consist of two structural domains, F(1) containing the extramembraneous catalytic core and F(0) containing the membrane proton channel, linked together by a central stalk and a peripheral stalk. During catalysis, ATP synthesis in the catalytic domain of F(1) is coupled via a rotary mechanism of the central stalk subunits to proton translocation. Functionally, component of the F(0) channel, it forms part of the peripheral stalk, linking F(1) to F(0). The chain is ATP synthase subunit b, chloroplastic from Nymphaea alba (White water-lily).